The following is a 247-amino-acid chain: tRNA pseudouridine synthase A (247 aa).

Catalysis depends on Asp52, which acts as the Nucleophile. A substrate-binding site is contributed by Tyr113.

This sequence belongs to the tRNA pseudouridine synthase TruA family. Homodimer.

It catalyses the reaction uridine(38/39/40) in tRNA = pseudouridine(38/39/40) in tRNA. In terms of biological role, formation of pseudouridine at positions 38, 39 and 40 in the anticodon stem and loop of transfer RNAs. This Sinorhizobium fredii (strain NBRC 101917 / NGR234) protein is tRNA pseudouridine synthase A.